The primary structure comprises 152 residues: Small ribosomal subunit protein uS15 (152 aa).

Residues 1 to 10 (MARMYARRRG) are compositionally biased toward basic residues. A disordered region spans residues 1-24 (MARMYARRRGTSSSVRPYRKEAPE).

This sequence belongs to the universal ribosomal protein uS15 family. Part of the 30S ribosomal subunit.

The sequence is that of Small ribosomal subunit protein uS15 from Methanoculleus marisnigri (strain ATCC 35101 / DSM 1498 / JR1).